The primary structure comprises 184 residues: Elongation factor P (184 aa).

Belongs to the elongation factor P family.

It localises to the cytoplasm. The protein operates within protein biosynthesis; polypeptide chain elongation. In terms of biological role, involved in peptide bond synthesis. Stimulates efficient translation and peptide-bond synthesis on native or reconstituted 70S ribosomes in vitro. Probably functions indirectly by altering the affinity of the ribosome for aminoacyl-tRNA, thus increasing their reactivity as acceptors for peptidyl transferase. In Polaromonas sp. (strain JS666 / ATCC BAA-500), this protein is Elongation factor P.